The primary structure comprises 500 residues: MKQVSNIEELNDQLLVRRQKMTTILENGQDPFGSRFERTHLSTEVKEQFADQTKEQLEENLQEVIIAGRIMTKRGKGKAGFAHIQDLGGQIQIYVRQDHVGEEAYELFKQADLGDIVGIRGNVFRTQVGELSVKAEEFTFLTKALRPMPEKFHGLQDVEQRYRQRYLDLMTNEDSKLTFIARSKIIRAIRNYLDNAGYLEVETPMLHTIAGGAAARPFITHHNALDMELYMRIAIELHLKRLIVGGLEKVYEIGRVFRNEGISTRHNPEFTMIELYEAYADYQDIMSLTENLIAHVAQEVLGTTTVQYGEDEINLAVGWKRVHMVDAVKEATGVDFWQPMTKEQAQALAKEHGVEVKDVHEVGHIINEFFEQKIEETLVQPTFVYGHPVEISPLAKKNPEDERFTDRFELFIVRREHANAFTELNDPIDQRQRFEAQLAEKAAGNDEAHEMDNDFIEALEYGMPPTGGLGIGIDRLIMLLTNSPSIRDVLLFPTMRHITK.

Mg(2+)-binding residues include E409 and E416.

The protein belongs to the class-II aminoacyl-tRNA synthetase family. As to quaternary structure, homodimer. Requires Mg(2+) as cofactor.

Its subcellular location is the cytoplasm. The catalysed reaction is tRNA(Lys) + L-lysine + ATP = L-lysyl-tRNA(Lys) + AMP + diphosphate. This Lysinibacillus sphaericus (strain C3-41) protein is Lysine--tRNA ligase.